The sequence spans 108 residues: UPF0060 membrane protein BH2744 (108 aa).

The next 4 membrane-spanning stretches (helical) occupy residues 6-26 (TLFL…WLWL), 31-51 (PVYL…IATF), 60-80 (VYAA…WWID), and 86-106 (TYDW…LWAP).

The protein belongs to the UPF0060 family.

The protein resides in the cell membrane. This is UPF0060 membrane protein BH2744 from Halalkalibacterium halodurans (strain ATCC BAA-125 / DSM 18197 / FERM 7344 / JCM 9153 / C-125) (Bacillus halodurans).